Consider the following 542-residue polypeptide: MNSNRSLLVMGLLLVSFLIFTQWQQDFNPEIQAQKQAQQQAQVASQSGDVPAASNANTVIAENATQGKTVTLESDVLRLTIDTLGGDVIASDLLAHNAELNSQTPFKLLQTGATTYVAQSGLVGKNGIDTNAGRPQYQVAQDTFVLAEGQNEMSVPMTFEKDGVLYTKTFVLKRGSYDVAVNFNVKNQTAATVEVQPYGQIKHTLLESSGSLTMPTYTGGAYSSAETNYKKYSFQDMEKANLDINTKAGWVALLQHYFVSAWVPNQDAENTIYSRTNNGIATIGYRGPVTTIAPNSEATITSQLWTGPKDQKEMEATAANLDLTVDYGWAWFIAKPLFALLTFIQSIVTNWGLAIIGVTIVVKTILYPLTKAQYTSMARMRMLQPKIQEMRERFGDDRQRMSQEMMKLYKEEKVNPMGGCLPILIQMPIFIALYWTFMEAVELRHAPFFGWIQDLSAQDPYYILPLLMGASMFLLQKMSPSPVTDPVQQKVMTFMPVMFTVFFLWFPSGLVLYWLTSNIITIVQQWLIYRNLEKKGLHSRKK.

A run of 5 helical transmembrane segments spans residues 7-27 (LLVM…QQDF), 338-358 (FALL…IIGV), 417-437 (MGGC…YWTF), 455-475 (LSAQ…MFLL), and 494-514 (FMPV…VLYW).

Belongs to the OXA1/ALB3/YidC family. Type 1 subfamily. In terms of assembly, interacts with the Sec translocase complex via SecD. Specifically interacts with transmembrane segments of nascent integral membrane proteins during membrane integration.

It is found in the cell inner membrane. Required for the insertion and/or proper folding and/or complex formation of integral membrane proteins into the membrane. Involved in integration of membrane proteins that insert both dependently and independently of the Sec translocase complex, as well as at least some lipoproteins. Aids folding of multispanning membrane proteins. This chain is Membrane protein insertase YidC, found in Actinobacillus pleuropneumoniae serotype 7 (strain AP76).